A 919-amino-acid polypeptide reads, in one-letter code: Aminodeoxychorismate synthase, chloroplastic (919 aa).

The transit peptide at 1–45 (MNMNFSFCSTSSELSYPSENVLRFSVASRLFSPKWKKSFISLPCR) directs the protein to the chloroplast. The region spanning 86 to 342 (RTLLIDNYDS…KDITVNYWSR (257 aa)) is the Glutamine amidotransferase type-1 domain. C172 (nucleophile) is an active-site residue. Residues H316 and E318 contribute to the active site. Residues 436–910 (IFMELFGKNR…KTRAPANAVM (475 aa)) are PABB component.

In the C-terminal section; belongs to the anthranilate synthase component I family.

The protein resides in the plastid. The protein localises to the chloroplast. It carries out the reaction chorismate + L-glutamine = 4-amino-4-deoxychorismate + L-glutamate. It functions in the pathway cofactor biosynthesis; tetrahydrofolate biosynthesis; 4-aminobenzoate from chorismate: step 1/2. With respect to regulation, activated by chorismate and inhibited by dihydrofolate and methotrexate. Functionally, bifunctional enzyme that catalyzes the biosynthesis of 4-amino-4-deoxychorismate (ADC) from chorismate and glutamine. In the first step, a glutamine amidotransferase generates ammonia that is channelled between the binding sites of glutamine and chorismate and used along with chorismate in the second step, catalyzed by aminodeoxychorismate synthase, to produce ADC. Required for the synthesis of 4-aminobenzoate (PABA), an important component in tetrahydrofolate biosynthesis. Does not possess ADC lyase activity. This chain is Aminodeoxychorismate synthase, chloroplastic (ADCS), found in Arabidopsis thaliana (Mouse-ear cress).